We begin with the raw amino-acid sequence, 178 residues long: MDLKNLTQEERSELSLIDVAHFILEQRKETILFPELVKEIQAFLGLKDAEIRERLVQFYTDMNIDGNFISLGNNTWGLRAWYPMDAIDEEVQTQTTPKKKRKSDDDDDEDEEILDDDVDYDDEEIVEELGEEEISLADVLLDEDEDDDDHLPDGIEGDLATVEDDYTDGDYTEDPEDK.

An HTH HARE-type domain is found at 14–81 (LSLIDVAHFI…GNNTWGLRAW (68 aa)). Disordered regions lie at residues 89 to 122 (EEVQ…DYDD) and 141 to 178 (LDED…PEDK). Acidic residues-rich tracts occupy residues 105-122 (DDDD…DYDD), 141-150 (LDEDEDDDDH), and 161-178 (TVED…PEDK).

The protein belongs to the RpoE family. As to quaternary structure, RNAP is composed of a core of 2 alpha, a beta and a beta' subunits. The core is associated with a delta subunit and one of several sigma factors.

In terms of biological role, participates in both the initiation and recycling phases of transcription. In the presence of the delta subunit, RNAP displays an increased specificity of transcription, a decreased affinity for nucleic acids, and an increased efficiency of RNA synthesis because of enhanced recycling. The polypeptide is Probable DNA-directed RNA polymerase subunit delta (Listeria innocua serovar 6a (strain ATCC BAA-680 / CLIP 11262)).